Consider the following 222-residue polypeptide: Histidine biosynthesis bifunctional protein HisIE (222 aa).

The segment at 1 to 128 (MQPLSPAFID…SLTLPPPMDA (128 aa)) is phosphoribosyl-AMP cyclohydrolase. The phosphoribosyl-ATP pyrophosphohydrolase stretch occupies residues 129–222 (CSELFRVIDQ…ANRRGAPRRN (94 aa)).

The protein in the N-terminal section; belongs to the PRA-CH family. In the C-terminal section; belongs to the PRA-PH family.

It localises to the cytoplasm. It carries out the reaction 1-(5-phospho-beta-D-ribosyl)-ATP + H2O = 1-(5-phospho-beta-D-ribosyl)-5'-AMP + diphosphate + H(+). The enzyme catalyses 1-(5-phospho-beta-D-ribosyl)-5'-AMP + H2O = 1-(5-phospho-beta-D-ribosyl)-5-[(5-phospho-beta-D-ribosylamino)methylideneamino]imidazole-4-carboxamide. It functions in the pathway amino-acid biosynthesis; L-histidine biosynthesis; L-histidine from 5-phospho-alpha-D-ribose 1-diphosphate: step 2/9. The protein operates within amino-acid biosynthesis; L-histidine biosynthesis; L-histidine from 5-phospho-alpha-D-ribose 1-diphosphate: step 3/9. The chain is Histidine biosynthesis bifunctional protein HisIE from Prochlorococcus marinus (strain MIT 9313).